We begin with the raw amino-acid sequence, 105 residues long: MANWDGKYISPYAEHGKKSEQVKKITVSIPIKVLEILTNERTRRQIRNLRHATNSELLCEAFLHAFTGQPLPTDEDLLKERHDEIPEQAKQVMRELGIDPEKWEY.

The protein belongs to the MetJ family. Homodimer.

Its subcellular location is the cytoplasm. Its function is as follows. This regulatory protein, when combined with SAM (S-adenosylmethionine) represses the expression of the methionine regulon and of enzymes involved in SAM synthesis. In Pasteurella multocida (strain Pm70), this protein is Met repressor.